Here is a 195-residue protein sequence, read N- to C-terminus: Interferon tau (195 aa).

The N-terminal stretch at 1–23 (MAFVLSLLMALVLASYSPGGSLG) is a signal peptide. Disulfide bonds link Cys-24–Cys-122 and Cys-52–Cys-162.

It belongs to the alpha/beta interferon family. IFN-alphaII subfamily. As to expression, constitutively and exclusively expressed in the mononuclear cells of the extraembryonic trophectoderm.

The protein resides in the secreted. Functionally, paracrine hormone primarily responsible for maternal recognition of pregnancy. Interacts with endometrial receptors, probably type I interferon receptors, and blocks estrogen receptor expression, preventing the estrogen-induced increase in oxytocin receptor expression in the endometrium. This results in the suppression of the pulsatile endometrial release of the luteolytic hormone prostaglandin F2-alpha, hindering the regression of the corpus luteum (luteolysis) and therefore a return to ovarian cyclicity. This, and a possible direct effect of IFN-tau on prostaglandin synthesis, leads in turn to continued ovarian progesterone secretion, which stimulates the secretion by the endometrium of the nutrients required for the growth of the conceptus. In summary, displays particularly high antiviral and antiproliferative potency concurrently with particular weak cytotoxicity, high antiluteolytic activity and immunomodulatory properties. In contrast with other IFNs, IFN-tau is not virally inducible. The sequence is that of Interferon tau (IFNT) from Cervus elaphus (Red deer).